Here is a 483-residue protein sequence, read N- to C-terminus: Coagulation factor X isoform 1 (483 aa).

Residues 1 to 20 (MAPQLLLCLILTFLWSLPEA) form the signal peptide. Positions 21–40 (ESNVFLKSKVANRFLQRTKR) are excised as a propeptide. Positions 41 to 86 (ANSLFEEFKSGNIERECIEERCSKEEAREAFEDDEKTETFWNVYVD) constitute a Gla domain. Glu-46, Glu-47, Glu-54, Glu-56, Glu-59, Glu-60, Glu-65, Glu-66, Glu-69, Glu-72, and Glu-75 each carry 4-carboxyglutamate. Cys-57 and Cys-62 are disulfide-bonded. The 37-residue stretch at 86–122 (DGDQCSSNPCHYGGTCKDGIGSYTCTCLSGYEGKNCE) folds into the EGF-like 1; calcium-binding domain. Cystine bridges form between Cys-90–Cys-101, Cys-95–Cys-110, Cys-112–Cys-121, Cys-129–Cys-140, Cys-136–Cys-149, Cys-151–Cys-164, Cys-172–Cys-345, Cys-245–Cys-250, Cys-265–Cys-281, Cys-393–Cys-407, and Cys-418–Cys-446. An O-linked (Hex...) serine glycan is attached at Ser-92. Position 103 is a (3R)-3-hydroxyaspartate (Asp-103). In terms of domain architecture, EGF-like 2 spans 125–165 (LYKSCRVDNGDCWHFCKPVQNGIQCSCAESYLLGEDGHSCV). Residues 183–238 (EANLPDFQTDFSDDYDEIDENNFVETPTNFSGLVLTVQSQNATLLKKSDNPSPDIR) constitute a propeptide, activation peptide. In terms of domain architecture, Peptidase S1 spans 239–470 (VVNGTDCKLG…FILWIKRIIR (232 aa)). The active-site Charge relay system is His-280. Asn-283 carries an N-linked (GlcNAc...) asparagine glycan. Asp-325 (charge relay system) is an active-site residue. The active-site Charge relay system is Ser-422.

This sequence belongs to the peptidase S1 family. As to quaternary structure, heterodimer of a light chain and a heavy chain; disulfide-linked. Post-translationally, gamma-carboxyglutamate residues are formed by vitamin K dependent carboxylation. These residues are essential for the binding of calcium. In terms of processing, the activation peptide is cleaved by factor IXa (in the intrinsic pathway), or by factor VIIa (in the extrinsic pathway). The iron and 2-oxoglutarate dependent 3-hydroxylation of aspartate and asparagine is (R) stereospecific within EGF domains. Plasma; synthesized in the liver.

The protein localises to the secreted. It carries out the reaction Selective cleavage of Arg-|-Thr and then Arg-|-Ile bonds in prothrombin to form thrombin.. Factor Xa is a vitamin K-dependent glycoprotein that converts prothrombin to thrombin in the presence of factor Va, calcium and phospholipid during blood clotting. This Pseudonaja textilis (Eastern brown snake) protein is Coagulation factor X isoform 1 (F10).